Consider the following 251-residue polypeptide: Probable transcriptional regulatory protein Franean1_5147 (251 aa).

This sequence belongs to the TACO1 family.

Its subcellular location is the cytoplasm. This is Probable transcriptional regulatory protein Franean1_5147 from Parafrankia sp. (strain EAN1pec).